The chain runs to 191 residues: MGKSCKVVVCGQASVGKTSILEQLLYGNHVVGSEMIETQEDIYVGSIETDRGVREQVRFYDTRGLRDGAELPRHCFSCTDGYVLVYSTDSRESFQRVELLKKEIDKSKDKKEVTIVVLGNKCDLQEQRRVDPDVAQHWAKSEKVKLWEVSVADRRSLLEPFVYLASKMTQPQSKSAFPLSRKNKGSGSLDG.

The tract at residues 1–191 (MGKSCKVVVC…KNKGSGSLDG (191 aa)) is small GTPase-like. Position 11–18 (11–18 (GQASVGKT)) interacts with GTP. Positions 35-43 (MIETQEDIY) match the Effector region motif. GTP is bound by residues 61–65 (DTRGL) and 120–123 (NKCD). Positions 169–191 (TQPQSKSAFPLSRKNKGSGSLDG) are disordered.

Belongs to the small GTPase superfamily. Ras family. KappaB-Ras subfamily. As to quaternary structure, interacts with both NF-kappa-B inhibitor alpha (NFKBIA) and beta (NFKBIB) in vitro. However, it probably only interacts with NFKBIB in vivo. Interacts with GFOD1. In terms of tissue distribution, widely expressed.

It is found in the cytoplasm. Atypical Ras-like protein that acts as a potent regulator of NF-kappa-B activity by preventing the degradation of NF-kappa-B inhibitor beta (NFKBIB) by most signals, explaining why NFKBIB is more resistant to degradation. May act by blocking phosphorylation of NFKBIB and nuclear localization of p65/RELA NF-kappa-B subunit. It is unclear whether it acts as a GTPase. Both GTP- and GDP-bound forms block phosphorylation of NFKBIB. This Homo sapiens (Human) protein is NF-kappa-B inhibitor-interacting Ras-like protein 2 (NKIRAS2).